A 116-amino-acid polypeptide reads, in one-letter code: Large ribosomal subunit protein bL20 (116 aa).

Belongs to the bacterial ribosomal protein bL20 family.

Its function is as follows. Binds directly to 23S ribosomal RNA and is necessary for the in vitro assembly process of the 50S ribosomal subunit. It is not involved in the protein synthesizing functions of that subunit. The polypeptide is Large ribosomal subunit protein bL20 (Bacteroides fragilis (strain ATCC 25285 / DSM 2151 / CCUG 4856 / JCM 11019 / LMG 10263 / NCTC 9343 / Onslow / VPI 2553 / EN-2)).